The primary structure comprises 1385 residues: Defecation cycle abnormal dec-7 (1385 aa).

A signal peptide spans 1-19 (MWTARHAVALLVVLTYAYS). Residue N156 is glycosylated (N-linked (GlcNAc...) asparagine). A disordered region spans residues 234-262 (SQTNYGAPNYQQAGAQSAANQQFSNPSQY). Residues 242 to 261 (NYQQAGAQSAANQQFSNPSQ) show a composition bias toward low complexity. One can recognise an NIDO domain in the interval 285-450 (QIYGKRKKRQ…GRWIHRVDEV (166 aa)). 7 N-linked (GlcNAc...) asparagine glycosylation sites follow: N313, N386, N413, N458, N480, N562, and N583. The AMOP domain maps to 681–840 (GRNWPIDMCI…DHCEFYYWRR (160 aa)). The 237-residue stretch at 852-1088 (AAGYIYGEPH…FWKIDGTNDK (237 aa)) folds into the VWFD domain. N-linked (GlcNAc...) asparagine glycans are attached at residues N909, N921, N975, N1009, and N1124. Residues 1179–1238 (ISCGPLLKKEGVVKTPPAANYLDGDKVVFSCKPKYYIHGDIERVCRNGTWSPGWWAWCRD) form the Sushi domain. Cystine bridges form between C1181–C1223 and C1209–C1236. Residue N1225 is glycosylated (N-linked (GlcNAc...) asparagine). Residues 1251–1271 (LLSIFGISLIFVIFFCILWNI) traverse the membrane as a helical segment. A disordered region spans residues 1321 to 1385 (MNQPSRPIPS…GNMRFETSAI (65 aa)).

As to expression, highly expressed in the intestinal epithelia.

Its subcellular location is the membrane. It is found in the cell junction. Its function is as follows. May negatively regulate activity of innexin gap junction protein inx-16, thereby mediating the rhythmic frequency of the defecation motor program. Required for the clustering of inx-16 to the cell-cell junction of the intestinal epithelia. Probably dispensable for intestinal integrity. May be a cytokine receptor. This chain is Defecation cycle abnormal dec-7, found in Caenorhabditis elegans.